The primary structure comprises 74 residues: Lambda-hexatoxin-Hv1e (74 aa).

A signal peptide spans 1 to 22 (MNTATCFIVLLVVATVIGGIEA). A propeptide spanning residues 23 to 35 (GEFDMRKDVMGLF) is cleaved from the precursor. 4 disulfide bridges follow: Cys-40/Cys-54, Cys-47/Cys-59, Cys-50/Cys-51, and Cys-53/Cys-69.

This sequence belongs to the neurotoxin 11 (kappa toxin) family. As to expression, expressed by the venom gland.

The protein localises to the secreted. Its function is as follows. This excitatory toxin inhibits insect calcium-activated potassium (KCa) channels (Slo-type). This chain is Lambda-hexatoxin-Hv1e, found in Hadronyche versuta (Blue mountains funnel-web spider).